A 292-amino-acid polypeptide reads, in one-letter code: Homoserine kinase (292 aa).

An ATP-binding site is contributed by Arg81 to Ala91.

It belongs to the GHMP kinase family. Homoserine kinase subfamily.

The protein resides in the cytoplasm. The enzyme catalyses L-homoserine + ATP = O-phospho-L-homoserine + ADP + H(+). It functions in the pathway amino-acid biosynthesis; L-threonine biosynthesis; L-threonine from L-aspartate: step 4/5. Catalyzes the ATP-dependent phosphorylation of L-homoserine to L-homoserine phosphate. This Pyrococcus furiosus (strain ATCC 43587 / DSM 3638 / JCM 8422 / Vc1) protein is Homoserine kinase.